A 271-amino-acid chain; its full sequence is ATP synthase subunit a (271 aa).

The next 5 membrane-spanning stretches (helical) occupy residues 38 to 58, 100 to 120, 146 to 166, 220 to 240, and 242 to 262; these read FWTL…LFLV, LIAP…LMDL, DVNI…FYSI, LIFI…LNVP, and AIFH…LTIV.

It belongs to the ATPase A chain family. F-type ATPases have 2 components, CF(1) - the catalytic core - and CF(0) - the membrane proton channel. CF(1) has five subunits: alpha(3), beta(3), gamma(1), delta(1), epsilon(1). CF(0) has three main subunits: a(1), b(2) and c(9-12). The alpha and beta chains form an alternating ring which encloses part of the gamma chain. CF(1) is attached to CF(0) by a central stalk formed by the gamma and epsilon chains, while a peripheral stalk is formed by the delta and b chains.

It localises to the cell inner membrane. Its function is as follows. Key component of the proton channel; it plays a direct role in the translocation of protons across the membrane. The sequence is that of ATP synthase subunit a from Salmonella choleraesuis (strain SC-B67).